The sequence spans 129 residues: Ribulose bisphosphate carboxylase small subunit (129 aa).

Positions E104–S120 are enriched in basic and acidic residues. Positions E104–R129 are disordered.

This sequence belongs to the RuBisCO small chain family. As to quaternary structure, heterohexadecamer of 8 large and 8 small subunits.

Functionally, ruBisCO catalyzes two reactions: the carboxylation of D-ribulose 1,5-bisphosphate, the primary event in carbon dioxide fixation, as well as the oxidative fragmentation of the pentose substrate. Both reactions occur simultaneously and in competition at the same active site. Although the small subunit is not catalytic it is essential for maximal activity. The polypeptide is Ribulose bisphosphate carboxylase small subunit (Sinorhizobium medicae (strain WSM419) (Ensifer medicae)).